A 494-amino-acid polypeptide reads, in one-letter code: Probable cytochrome P450 518A1 (494 aa).

Residues 1 to 21 form a helical membrane-spanning segment; sequence MSILIILIISIIFYLIFDFLY. C438 is a heme binding site.

It belongs to the cytochrome P450 family. Heme serves as cofactor.

It is found in the membrane. This Dictyostelium discoideum (Social amoeba) protein is Probable cytochrome P450 518A1 (cyp518A1).